The chain runs to 367 residues: Regulatory protein E2 (367 aa).

A transactivation domain region spans residues Met-1–Ser-200. The segment at Ser-225–Thr-246 is disordered. The segment at Ala-283 to Leu-367 is DNA-binding domain.

This sequence belongs to the papillomaviridae E2 protein family. As to quaternary structure, binds DNA as homodimer. Interacts with protein E1; this interaction greatly increases E1 DNA-binding activity. Interacts with protein L1; this interaction enhances E2-dependent replication and transcription activation. Interacts with protein L2; this interaction inhibits E2 transcriptional activity but not DNA replication function E2. Interacts with protein E7; this interaction inhibits E7 oncogenic activity. Interacts with host TAF1; this interaction modulates E2-dependent transcriptional regulation. Interacts with host BRD4; this interaction mediates E2 transcriptional activation function. Additionally, the interaction with host BRD4 on mitotic chromosomes mediates tethering of the viral genome. Interacts with host TOPBP1; this interaction is required for optimal viral DNA replication. Post-translationally, phosphorylated.

Its subcellular location is the host nucleus. Functionally, plays a role in the initiation of viral DNA replication. A dimer of E2 interacts with a dimer of E1 in order to improve specificity of E1 DNA binding activity. Once the complex recognizes and binds DNA at specific sites, the E2 dimer is removed from DNA. E2 also regulates viral transcription through binding to the E2RE response element (5'-ACCNNNNNNGGT-3') present in multiple copies in the regulatory regions of the viral genome. Activates or represses transcription depending on E2RE's position with regards to proximal promoter elements including the TATA-box. Repression occurs by sterically hindering the assembly of the transcription initiation complex. The polypeptide is Regulatory protein E2 (Human papillomavirus 11).